Consider the following 427-residue polypeptide: UPF0229 protein YeaH (427 aa).

Basic and acidic residues predominate over residues 79-90 (NDHFIQNDRIER). The segment at 79–110 (NDHFIQNDRIERPQGGGGGSGSGQGQASQDGE) is disordered. Gly residues predominate over residues 92–102 (QGGGGGSGSGQ).

This sequence belongs to the UPF0229 family.

The chain is UPF0229 protein YeaH from Salmonella paratyphi B (strain ATCC BAA-1250 / SPB7).